The sequence spans 245 residues: tRNA1(Val) (adenine(37)-N6)-methyltransferase (245 aa).

Belongs to the methyltransferase superfamily. tRNA (adenine-N(6)-)-methyltransferase family.

Its subcellular location is the cytoplasm. It carries out the reaction adenosine(37) in tRNA1(Val) + S-adenosyl-L-methionine = N(6)-methyladenosine(37) in tRNA1(Val) + S-adenosyl-L-homocysteine + H(+). Functionally, specifically methylates the adenine in position 37 of tRNA(1)(Val) (anticodon cmo5UAC). This is tRNA1(Val) (adenine(37)-N6)-methyltransferase from Shigella boydii serotype 18 (strain CDC 3083-94 / BS512).